A 304-amino-acid chain; its full sequence is Ribosomal RNA small subunit methyltransferase H (304 aa).

S-adenosyl-L-methionine-binding positions include 47–49, Asp-66, Phe-93, Asp-108, and Gln-115; that span reads GGH.

It belongs to the methyltransferase superfamily. RsmH family.

It is found in the cytoplasm. The enzyme catalyses cytidine(1402) in 16S rRNA + S-adenosyl-L-methionine = N(4)-methylcytidine(1402) in 16S rRNA + S-adenosyl-L-homocysteine + H(+). Its function is as follows. Specifically methylates the N4 position of cytidine in position 1402 (C1402) of 16S rRNA. In Prochlorococcus marinus (strain NATL1A), this protein is Ribosomal RNA small subunit methyltransferase H.